A 162-amino-acid polypeptide reads, in one-letter code: Transcription elongation factor GreA (162 aa).

Positions 46–77 (RENAEYKAAREEQTRLNNMVTRLQEEIERAQV) form a coiled coil.

The protein belongs to the GreA/GreB family.

Its function is as follows. Necessary for efficient RNA polymerase transcription elongation past template-encoded arresting sites. The arresting sites in DNA have the property of trapping a certain fraction of elongating RNA polymerases that pass through, resulting in locked ternary complexes. Cleavage of the nascent transcript by cleavage factors such as GreA or GreB allows the resumption of elongation from the new 3'terminus. GreA releases sequences of 2 to 3 nucleotides. The chain is Transcription elongation factor GreA from Treponema pallidum (strain Nichols).